Reading from the N-terminus, the 367-residue chain is MQTLQVDLGERSYPIYIGAGLLDRAECMVPHLAGRQVAVVTNETVAPLYLERLSQTLAGHELTPIVLPDGEAFKHWETLQKIFDGLLEARHDRRTTLIALGGGVVGDMAGFAAACYQRGVDFIQIPTTLLSQVDSSVGGKTGINHPLGKNMIGAFYQPKAVVIDTATLATLPERELSAGLAEVIKYGLICDEPFLGWLETHMAALRALDAAALTEAIARSCAAKARVVGVDERESGVRATLNLGHTFGHAIETHMGYGAWLHGEAVAAGSVMALEMSRRLGWLGEAERDRGIRLLQRAGLPVVPPAQMSADDFLGHMAVDKKVLGGRLRLVLLRRLGEAVVTGDFPHEALQATLDTDYRTLMEQISH.

NAD(+) is bound by residues Asp-69 to Lys-74, Gly-103 to Asp-107, Thr-127 to Thr-128, Lys-140, Lys-149, and Thr-167 to Thr-170. Residues Glu-182, His-245, and His-262 each contribute to the Zn(2+) site.

The protein belongs to the sugar phosphate cyclases superfamily. Dehydroquinate synthase family. The cofactor is Co(2+). Requires Zn(2+) as cofactor. NAD(+) serves as cofactor.

The protein resides in the cytoplasm. It catalyses the reaction 7-phospho-2-dehydro-3-deoxy-D-arabino-heptonate = 3-dehydroquinate + phosphate. It participates in metabolic intermediate biosynthesis; chorismate biosynthesis; chorismate from D-erythrose 4-phosphate and phosphoenolpyruvate: step 2/7. Its function is as follows. Catalyzes the conversion of 3-deoxy-D-arabino-heptulosonate 7-phosphate (DAHP) to dehydroquinate (DHQ). The polypeptide is 3-dehydroquinate synthase (Azotobacter vinelandii (strain DJ / ATCC BAA-1303)).